We begin with the raw amino-acid sequence, 206 residues long: CASP-like protein 4B2 (206 aa).

2 stretches are compositionally biased toward low complexity: residues 1–12 and 24–36; these read MAMVPADADAAA and SSQNGAPNSAAAA. The disordered stretch occupies residues 1 to 42; it reads MAMVPADADAAAKPPPDVEKPDYSSQNGAPNSAAAAAGGGGG. Residues 1-60 lie on the Cytoplasmic side of the membrane; the sequence is MAMVPADADAAAKPPPDVEKPDYSSQNGAPNSAAAAAGGGGGGVVDSVVARWRREDMLDK. The helical transmembrane segment at 61–81 threads the bilayer; that stretch reads SPLALHAAAAAFAFVALVLVA. The Extracellular portion of the chain corresponds to 82–99; the sequence is SNQHGDWMEFDRYQEYRY. A helical membrane pass occupies residues 100–120; that stretch reads LLAIAALAFAYSLAQALRHAL. Topologically, residues 121–138 are cytoplasmic; it reads RMRRGVDPVPTASGRLLD. The helical transmembrane segment at 139–159 threads the bilayer; that stretch reads FASDQVVAYLLMSALSAATPI. Residues 160–174 lie on the Extracellular side of the membrane; sequence TNRMRSAVINRFTDT. The chain crosses the membrane as a helical span at residues 175–195; that stretch reads TAAAISMAFLAFVSLALSAIV. Over 196–206 the chain is Cytoplasmic; that stretch reads SGYKLSKQTYM.

It belongs to the Casparian strip membrane proteins (CASP) family. Homodimer and heterodimers.

It is found in the cell membrane. In Oryza sativa subsp. japonica (Rice), this protein is CASP-like protein 4B2.